Reading from the N-terminus, the 355-residue chain is Homeobox protein knotted-1-like 12 (355 aa).

2 disordered regions span residues alanine 52 to glutamate 82 and glutamate 207 to glutamate 233. The segment covering glycine 60–histidine 75 has biased composition (basic residues). Basic and acidic residues predominate over residues proline 218–glutamate 233. Positions glutamate 236–phenylalanine 256 constitute an ELK domain. A DNA-binding region (homeobox; TALE-type) is located at residues serine 257–serine 320.

It belongs to the TALE/KNOX homeobox family. As to expression, expressed in stems, rachis and inflorescence.

The protein localises to the nucleus. Its function is as follows. Probable transcription factor that may be involved in shoot formation during embryogenesis. This is Homeobox protein knotted-1-like 12 (OSH15) from Oryza sativa subsp. japonica (Rice).